Here is a 393-residue protein sequence, read N- to C-terminus: Myb-related transcription factor, partner of profilin (393 aa).

The span at 1-11 shows a compositional bias: low complexity; sequence MASATAAAAPG. Residues 1-21 form a disordered region; the sequence is MASATAAAAPGEAEETTRLRK. The Myb-like domain occupies 16 to 88; the sequence is TTRLRKPRFS…EVQKRWNDFK (73 aa). Positions 87–90 match the Nuclear localization signal motif; it reads FKRR. Disordered regions lie at residues 125–254, 290–323, and 348–393; these read GPGV…EQSL, PLLPGTPADPLPPPPPPPPPPPPKPVLPPSAPKV, and IISP…WKSP. A compositionally biased stretch (low complexity) spans 142-157; that stretch reads AAASSQPQASTASTQR. The segment covering 160–171 has biased composition (basic and acidic residues); sequence LSEDRRQDRRAD. A compositionally biased stretch (polar residues) spans 173–184; it reads PAQSKGGSSSPE. 4 stretches are compositionally biased toward pro residues: residues 219 to 229, 238 to 247, 296 to 320, and 359 to 368; these read PPLPAPPPPPT, SPSPTPPRPT, PADPLPPPPPPPPPPPPKPVLPPSA, and KPLPPAPPLP. Basic residues predominate over residues 375 to 393; that stretch reads HKRRKGFPTRKRRGRWKSP. 2 short sequence motifs (nuclear localization signal) span residues 376–379 and 384–387; these read KRRK and RKRR.

As to quaternary structure, interacts with PFN1. Homodimer and heterodimer with PFN1. As to expression, ubiquitous. Highly expressed in brain, liver and testis. Moderate expression in heart, lung and skeletal muscle. Low expression in spleen and kidney.

The protein localises to the nucleus. In terms of biological role, transcriptional repressor; DNA-binding protein that specifically recognizes the core sequence 5'-YAAC[GT]G-3'. Dimerization with PFN1 reduces its DNA-binding capacity. In Mus musculus (Mouse), this protein is Myb-related transcription factor, partner of profilin (Mypop).